The following is a 530-amino-acid chain: Chaperone Ric-8A (530 aa).

A Phosphoserine; by CK2 modification is found at serine 435. Position 440 is a phosphothreonine; by CK2 (threonine 440). Residue threonine 442 is modified to Phosphothreonine. Phosphoserine occurs at positions 501, 522, 523, and 527.

The protein belongs to the synembryn family. In terms of assembly, interacts with GDP-bound G alpha proteins GNAI1, GNAO1 and GNAQ, and with GNA13 with lower affinity. Does not interact with G-alpha proteins when they are in complex with subunits beta and gamma. Interacts (via C-terminus) with RGS14; the interaction stimulates the dissociation of the complex between RGS14 and the active GTP-bound form of GNAI1. Interacts with NCS1; interaction is favored in the absence of Ca(2+) and myristoylation of NCS1 is not required. In terms of processing, phosphorylated at Ser-435 and Thr-440 by CK2, stabilizing its interface with G alpha proteins.

Its subcellular location is the cytoplasm. It localises to the cell cortex. In terms of biological role, chaperone that specifically binds and folds nascent G alpha proteins prior to G protein heterotrimer formation, promoting their stability and activity: folds GNAI1, GNAO1, GNA13 and GNAQ. Does not fold G(s) G-alpha proteins GNAS nor GNAL. Also acts as a guanine nucleotide exchange factor (GEF) for G alpha proteins by stimulating exchange of bound GDP for free GTP. Involved in regulation of microtubule pulling forces during mitotic movement of chromosomes by stimulating G(i)-alpha protein (GNAI1), possibly leading to release G(i)-alpha-GTP and NuMA proteins from the NuMA-GPSM2-G(i)-alpha-GDP complex. Also acts as an activator for G(q)-alpha (GNAQ) protein by enhancing the G(q)-coupled receptor-mediated ERK activation. The protein is Chaperone Ric-8A of Rattus norvegicus (Rat).